A 136-amino-acid polypeptide reads, in one-letter code: Small ribosomal subunit protein uS8c (136 aa).

This sequence belongs to the universal ribosomal protein uS8 family. As to quaternary structure, part of the 30S ribosomal subunit.

The protein localises to the plastid. The protein resides in the chloroplast. In terms of biological role, one of the primary rRNA binding proteins, it binds directly to 16S rRNA central domain where it helps coordinate assembly of the platform of the 30S subunit. The polypeptide is Small ribosomal subunit protein uS8c (rps8) (Hordeum vulgare (Barley)).